The primary structure comprises 395 residues: Gastric triacylglycerol lipase (395 aa).

The first 18 residues, 1 to 18 (MWLLLVTSVLSAFGGAHG), serve as a signal peptide directing secretion. N-linked (GlcNAc...) asparagine glycosylation occurs at N33. Positions 81–376 (LQHGLIASAT…LPYNHLDFIW (296 aa)) constitute an AB hydrolase-1 domain. S171 functions as the Nucleophile in the catalytic mechanism. C245 and C254 are joined by a disulfide. N270 is a glycosylation site (N-linked (GlcNAc...) asparagine). Active-site charge relay system residues include D342 and H371.

This sequence belongs to the AB hydrolase superfamily. Lipase family.

It is found in the secreted. The catalysed reaction is a triacylglycerol + H2O = a diacylglycerol + a fatty acid + H(+). It catalyses the reaction 1,2,3-tri-(9Z-octadecenoyl)-glycerol + H2O = 1,2-di-(9Z-octadecenoyl)-sn-glycerol + (9Z)-octadecenoate + H(+). The enzyme catalyses 1,2,3-trioctanoylglycerol + H2O = 1,2-dioctanoyl-sn-glycerol + octanoate + H(+). Its function is as follows. Catalyzes the hydrolysis of triacylglycerols to yield free fatty acids, diacylglycerol, monoacylglycerol, and glycerol. Shows a preferential hydrolysis at the sn-3 position of triacylglycerol. The protein is Gastric triacylglycerol lipase (Lipf) of Mus musculus (Mouse).